We begin with the raw amino-acid sequence, 94 residues long: Translation initiation factor IF-1 (94 aa).

The region spanning 1–72 (MAKEELIQFE…EKGRLIFRHK (72 aa)) is the S1-like domain. Positions 71 to 94 (HKDERPGGTGAPRGAPPRGQFRRR) are disordered. A compositionally biased stretch (low complexity) spans 82–94 (PRGAPPRGQFRRR).

This sequence belongs to the IF-1 family. Component of the 30S ribosomal translation pre-initiation complex which assembles on the 30S ribosome in the order IF-2 and IF-3, IF-1 and N-formylmethionyl-tRNA(fMet); mRNA recruitment can occur at any time during PIC assembly.

The protein resides in the cytoplasm. Functionally, one of the essential components for the initiation of protein synthesis. Stabilizes the binding of IF-2 and IF-3 on the 30S subunit to which N-formylmethionyl-tRNA(fMet) subsequently binds. Helps modulate mRNA selection, yielding the 30S pre-initiation complex (PIC). Upon addition of the 50S ribosomal subunit IF-1, IF-2 and IF-3 are released leaving the mature 70S translation initiation complex. The chain is Translation initiation factor IF-1 from Rhodopseudomonas palustris (strain BisB5).